We begin with the raw amino-acid sequence, 160 residues long: Major pollen allergen Bet v 1-B (160 aa).

The brassinolide site is built by Lys-55, Tyr-82, Tyr-84, and Asn-101.

The protein belongs to the BetVI family.

The protein resides in the cytoplasm. In terms of biological role, may be a general steroid carrier protein. This is Major pollen allergen Bet v 1-B (BETV1B) from Betula pendula (European white birch).